Reading from the N-terminus, the 446-residue chain is N-succinylarginine dihydrolase (446 aa).

Substrate is bound by residues 19-28 (AGLSFGNVAS), Asn-110, and 137-138 (HR). The active site involves Glu-174. Arg-213 lines the substrate pocket. His-249 is an active-site residue. 2 residues coordinate substrate: Asp-251 and Asn-364. Cys-370 serves as the catalytic Nucleophile.

Belongs to the succinylarginine dihydrolase family. As to quaternary structure, homodimer.

The catalysed reaction is N(2)-succinyl-L-arginine + 2 H2O + 2 H(+) = N(2)-succinyl-L-ornithine + 2 NH4(+) + CO2. It participates in amino-acid degradation; L-arginine degradation via AST pathway; L-glutamate and succinate from L-arginine: step 2/5. Its function is as follows. Catalyzes the hydrolysis of N(2)-succinylarginine into N(2)-succinylornithine, ammonia and CO(2). This is N-succinylarginine dihydrolase from Burkholderia cenocepacia (strain HI2424).